A 309-amino-acid polypeptide reads, in one-letter code: HTH-type transcriptional activator AaeR (309 aa).

In terms of domain architecture, HTH lysR-type spans 1-59; it reads MERLKRMSVFAKVVEFGSFTAAARQLQMSVSSISQTVSKLEDELQVKLLNRSTRSIGLT. Residues 19–38 constitute a DNA-binding region (H-T-H motif); sequence FTAAARQLQMSVSSISQTVS.

This sequence belongs to the LysR transcriptional regulatory family.

With respect to regulation, activity is regulated by p-hydroxybenzoic acid. Transcriptional regulator that activates expression of the aaeXAB operon, which is involved in the efflux of aromatic carboxylic acids such as p-hydroxybenzoic acid (pHBA). In the presence of the effector pHBA, acts by binding to a single target within the aaeXAB-aaeR intergenic region. In the absence of pHBA, binds more than 50 sites along the E.coli K12 genome, including genes related to biofilm formation and several genes involved in stress response, suggesting that it might play a role in quorum sensing in the absence of pHBA. The protein is HTH-type transcriptional activator AaeR of Escherichia coli (strain K12).